The sequence spans 587 residues: MPVVGKIIKIAGPVVVAEGMKGAQMYEVVKVGEEKLTGEIIQLHDDKAVIQVYEETSGIKPGEPVVGTGAPLSVELGPGMLRAMYDGIQRPLTAIEEKTGSIFIPRGVDVPALPRDIKWEFKPVVNEGDYVEEGDIIGTVDETPSIVHKILVPIGVKGKIVEIKEGKFTVEETVAVVETENGERKEITMMQKWPVRKPRPYKEKLPPEIPLITGQRVEDTFFTLAKGGTAAIPGPFGSGKTVTQHQLAKWSDADVVVYIGCGERGNEMTEVIEEFPHLEDIRTGNKLMDRTVLIANTSNMPVAAREASVYTGITIAEYFRDMGYGVLLTADSTSRWAEAMREISGRLEEMPGEEGYPAYLASRLAQFYERAGRVITLGKDNRQGFVCIVGAVSPPGGDFSEPVTSNTLRIVKVFWALDANLARRRHFPAINWLQSYSLYIDDVTEWWNTNTGPDWRQLRDEAMSLLQKEAELQEIVQLVGPDALPDRERVILEVARMLREDFLQQDAFDEVDTYCPPMKQYLMLKIIMTFYQEALKAVERGVEPAKILGVSVKQDIARMKYIPHDEFINVKSKEIMEKIKNELGSLN.

234 to 241 (GPFGSGKT) serves as a coordination point for ATP.

It belongs to the ATPase alpha/beta chains family. As to quaternary structure, the N-terminus (approximately residues 106-122) interacts with subunit H. Has multiple subunits with at least A(3), B(3), C, D, E(1 or 2), F, H(2), I and proteolipid K(x).

It localises to the cell membrane. The enzyme catalyses ATP + H2O + 4 H(+)(in) = ADP + phosphate + 5 H(+)(out). Its activity is regulated as follows. ATP hydrolysis is inhibited by N',N'-dicyclohexylcarbodiimide. Its function is as follows. Component of the A-type ATP synthase that produces ATP from ADP in the presence of a proton gradient across the membrane. The A chain is the catalytic subunit. Hydrolyzes ATP, GTP (86% of ATPase rate) and UTP (54% of ATPase rate), has very poor activity on CTP. This Methanocaldococcus jannaschii (strain ATCC 43067 / DSM 2661 / JAL-1 / JCM 10045 / NBRC 100440) (Methanococcus jannaschii) protein is A-type ATP synthase subunit A.